Reading from the N-terminus, the 433-residue chain is Arrestin domain-containing protein 1 (433 aa).

Disordered regions lie at residues 296–322 (GLGL…AEAA) and 349–372 (LSSV…PLHP). Residues 301-312 (PGAPPLVVPSAP) are compositionally biased toward pro residues. 2 consecutive short sequence motifs (PPxY motif) follow at residues 402 to 405 (PPEY) and 415 to 418 (PPSY).

Belongs to the arrestin family. In terms of assembly, interacts (via PPxY motifs) with ITCH (via WW domains); the interaction is direct and participates in the recruitment of the ubiquitin-protein ligase ITCH to the NOTCH1 receptor. Interacts with ARRB1 and ARRB2; the interaction is direct. Interacts with TSG101; may recruit TSG101 to the plasma membrane. Interacts (via PPxY motifs) with WWP2 (via WW domains); ubiquitinates ARRDC1. Interacts with SLC11A2; controls the incorporation of SLC11A2 into extracellular vesicles through an ubiquitination-dependent mechanism. Interacts with WWP1 (via WW domains). Interacts with NEDD4 (via WW domains). Interacts with PDCD6IP. Ubiquitinated. Ubiquitination by WWP2; promotes localization to extracellular microvesicles. Ubiquitinated by WWP1.

Its subcellular location is the cell membrane. In terms of biological role, functions as an adapter recruiting ubiquitin-protein ligases to their specific substrates. Through an ubiquitination-dependent mechanism plays for instance a role in the incorporation of SLC11A2 into extracellular vesicles. More generally, plays a role in the extracellular transport of proteins between cells through the release in the extracellular space of microvesicles. By participating in the ITCH-mediated ubiquitination and subsequent degradation of NOTCH1, negatively regulates the NOTCH signaling pathway. The sequence is that of Arrestin domain-containing protein 1 from Homo sapiens (Human).